An 837-amino-acid polypeptide reads, in one-letter code: Probable aldehyde oxidase 4 (837 aa).

Residues 9-98 enclose the 2Fe-2S ferredoxin-type domain; it reads ERVVFELNGE…FCSIITTEGL (90 aa). [2Fe-2S] cluster contacts are provided by Cys50, Cys55, Cys58, and Cys80. Residues 240–427 form the FAD-binding PCMH-type domain; the sequence is ISGPREGWYC…LSIFIPHWAS (188 aa).

The protein belongs to the xanthine dehydrogenase family. Aldehyde oxidases (AO) are homodimers and heterodimers of AO subunits. [2Fe-2S] cluster is required as a cofactor. The cofactor is FAD. Mo-molybdopterin serves as cofactor.

It catalyses the reaction an aldehyde + O2 + H2O = a carboxylate + H2O2 + H(+). This Oryza sativa subsp. japonica (Rice) protein is Probable aldehyde oxidase 4.